The sequence spans 498 residues: Actin-binding protein WASF2 (498 aa).

Disordered stretches follow at residues 173–203 (KEKR…KEEW) and 240–435 (NVDA…AVSD). Positions 252-263 (SDSASSPSPSFS) are enriched in low complexity. The segment covering 298–407 (SHPPPAPPLG…PPPGPPPPPF (110 aa)) has biased composition (pro residues). The region spanning 436-453 (ARSDLLSAIRQGFQLRRV) is the WH2 domain. Serine 474 carries the post-translational modification Phosphoserine.

It belongs to the SCAR/WAVE family. In terms of assembly, binds actin and the Arp2/3 complex. Interacts with BAIAP2. Component of the WAVE2 complex composed of ABI1, CYFIP1/SRA1, NCKAP1/NAP1 (NCKAP1l/HEM1 in hematopoietic cells) and WASF2/WAVE2. Directly interacts with BRK1. Interacts with FNBP1L (via the SH3 domain). As to quaternary structure, (Microbial infection) Interacts with human cytomegalovirus protein UL135. Expressed in all tissues with strongest expression in placenta, lung, and peripheral blood leukocytes, but not in skeletal muscle.

Its subcellular location is the cytoplasm. It is found in the cytoskeleton. The protein localises to the cell projection. The protein resides in the lamellipodium. It localises to the basolateral cell membrane. Functionally, downstream effector molecule involved in the transmission of signals from tyrosine kinase receptors and small GTPases to the actin cytoskeleton. Promotes formation of actin filaments. Part of the WAVE complex that regulates lamellipodia formation. The WAVE complex regulates actin filament reorganization via its interaction with the Arp2/3 complex. The chain is Actin-binding protein WASF2 from Homo sapiens (Human).